The sequence spans 96 residues: Large ribosomal subunit protein uL18m (96 aa).

Belongs to the universal ribosomal protein uL18 family.

The protein resides in the mitochondrion. The sequence is that of Large ribosomal subunit protein uL18m (RPL18) from Reclinomonas americana.